The chain runs to 556 residues: Urocanate hydratase (556 aa).

NAD(+) contacts are provided by residues 52–53, Q130, 176–178, E196, R201, 242–243, 263–267, 273–274, and Y322; these read GG, GMG, NA, QTSAH, and YL. Residue C410 is part of the active site. G492 contributes to the NAD(+) binding site.

The protein belongs to the urocanase family. NAD(+) is required as a cofactor.

It localises to the cytoplasm. It carries out the reaction 4-imidazolone-5-propanoate = trans-urocanate + H2O. Its pathway is amino-acid degradation; L-histidine degradation into L-glutamate; N-formimidoyl-L-glutamate from L-histidine: step 2/3. Functionally, catalyzes the conversion of urocanate to 4-imidazolone-5-propionate. The protein is Urocanate hydratase of Shewanella sp. (strain MR-7).